Reading from the N-terminus, the 61-residue chain is Large ribosomal subunit protein uL30 (61 aa).

The protein belongs to the universal ribosomal protein uL30 family. In terms of assembly, part of the 50S ribosomal subunit.

The protein is Large ribosomal subunit protein uL30 of Rubrobacter xylanophilus (strain DSM 9941 / JCM 11954 / NBRC 16129 / PRD-1).